A 498-amino-acid polypeptide reads, in one-letter code: Interferon regulatory factor 5 (498 aa).

Position 10 is a phosphothreonine (Thr10). A Nuclear localization signal motif is present at residues 12 to 18; it reads PRRVRLK. A DNA-binding region (IRF tryptophan pentad repeat) is located at residues 14 to 122; it reads RVRLKPWLVA…QPYKIYEVCS (109 aa). The segment at 121-207 is disordered; it reads CSNGPAPTDS…SPLAPPPGNP (87 aa). The Nuclear export signal signature appears at 150–160; the sequence is LQRMLPSLSLT. At Ser158 the chain carries Phosphoserine; by TBK1. Residues 168-206 are compositionally biased toward pro residues; the sequence is TLQPPTLRPPTLQPPTLQPPVVLGPPAPDPSPLAPPPGN. Residue Ser293 is modified to Phosphoserine; by TBK1. Ser301 carries the phosphoserine modification. Residues Lys411 and Lys412 each participate in a glycyl lysine isopeptide (Lys-Gly) (interchain with G-Cter in ubiquitin) cross-link. Phosphoserine occurs at positions 431, 435, 437, and 440. At Ser446 the chain carries Phosphoserine; by IKKB. The segment at 478–498 is disordered; that stretch reads PPGAGLGVGQGPWPMHPAGMQ.

Belongs to the IRF family. In terms of assembly, homodimer, when phosphorylated. Interacts with TASL (via pLxIS motif); interaction takes place downstream of TLR7, TLR8 or TLR9, leading to its activation. Interacts with MYD88 and TRAF6. Post-translationally, phosphorylation of serine and threonine residues by IKBKB in a C-terminal autoinhibitory region, stimulates dimerization, transport into the nucleus, assembly with the coactivator CBP/EP300 and initiation of transcription. In terms of processing, 'Lys-63'-linked polyubiquitination by TRAF6 is required for activation.

The protein localises to the cytoplasm. The protein resides in the nucleus. With respect to regulation, maintained as a monomer in an autoinhibited state. Phosphorylation and activation follow the following steps: innate adapter protein TASL recruits IRF5, thereby licensing IRF5 for phosphorylation by IKBKB. Phosphorylated IRF5 dissociates from the adapter proteins, dimerizes, and then enters the nucleus to induce IFNs. Its activity is regulated as follows. (Microbial infection) Activated upon coronavirus SARS-CoV-2 infection. Transcription factor that plays a critical role in innate immunity by activating expression of type I interferon (IFN) IFNA and INFB and inflammatory cytokines downstream of endolysosomal toll-like receptors TLR7, TLR8 and TLR9. Regulates the transcription of type I IFN genes (IFN-alpha and IFN-beta) and IFN-stimulated genes (ISG) by binding to an interferon-stimulated response element (ISRE) in their promoters. Can efficiently activate both the IFN-beta (IFNB) and the IFN-alpha (IFNA) genes and mediate their induction downstream of the TLR-activated, MyD88-dependent pathway. Key transcription factor regulating the IFN response during SARS-CoV-2 infection. This is Interferon regulatory factor 5 from Homo sapiens (Human).